Consider the following 261-residue polypeptide: Homeobox protein engrailed-2b (261 aa).

Composition is skewed to basic and acidic residues over residues 1 to 21 (MEENDHSNRDVERQDSGDESN), 53 to 72 (GRRKEGSRRDEINIVERENR), and 100 to 116 (KKTDISTDESLKSRAET). 3 disordered regions span residues 1 to 24 (MEENDHSNRDVERQDSGDESNRAI), 53 to 125 (GRRK…SSDS), and 152 to 176 (DRPSSGPRSRKPKKKTPTKEDKRPR). The segment at residues 172 to 231 (DKRPRTAFTAEQLQRLKNEFQNNRYLTEQRRQALAQELGLNESQIKIWFQNKRAKIKKAT) is a DNA-binding region (homeobox).

This sequence belongs to the engrailed homeobox family.

It is found in the nucleus. This chain is Homeobox protein engrailed-2b (eng2b), found in Danio rerio (Zebrafish).